We begin with the raw amino-acid sequence, 214 residues long: Large ribosomal subunit protein uL3 (214 aa).

Positions 133 to 153 (GRATHGNSRSHNVPGSIGMAQ) are disordered. Glutamine 153 bears the N5-methylglutamine mark.

Belongs to the universal ribosomal protein uL3 family. Part of the 50S ribosomal subunit. Forms a cluster with proteins L14 and L19. Post-translationally, methylated by PrmB.

In terms of biological role, one of the primary rRNA binding proteins, it binds directly near the 3'-end of the 23S rRNA, where it nucleates assembly of the 50S subunit. The protein is Large ribosomal subunit protein uL3 of Cupriavidus metallidurans (strain ATCC 43123 / DSM 2839 / NBRC 102507 / CH34) (Ralstonia metallidurans).